Here is a 109-residue protein sequence, read N- to C-terminus: Staphostatin B (109 aa).

The interval 97–101 is binds to staphopain B; that stretch reads IGTSR.

Belongs to the protease inhibitor I57 (SspC) family. As to quaternary structure, forms a stable non-covalent complex with prematurely activated/folded SspB.

It localises to the cytoplasm. In terms of biological role, specifically inhibits the cysteine protease staphopain B (SspB) by blocking the active site of the enzyme. Probably required to protect cytoplasmic proteins from being degraded by prematurely activated/folded prostaphopain B. Also involved in growth capacity, viability and bacterial morphology. In Staphylococcus aureus (strain NCTC 8325 / PS 47), this protein is Staphostatin B (sspC).